We begin with the raw amino-acid sequence, 363 residues long: Protein disulfide-isomerase 1 (363 aa).

The first 20 residues, 1 to 20 (MKILLFVTLIALAFVALCSA), serve as a signal peptide directing secretion. Thioredoxin domains are found at residues 21 to 132 (EGNV…NHAK) and 133 to 285 (TNVK…AAAE). Catalysis depends on nucleophile residues Cys-51, Cys-54, Cys-172, and Cys-175. 2 cysteine pairs are disulfide-bonded: Cys-51-Cys-54 and Cys-172-Cys-175.

Belongs to the protein disulfide isomerase family.

It localises to the endoplasmic reticulum lumen. The catalysed reaction is Catalyzes the rearrangement of -S-S- bonds in proteins.. Its function is as follows. Participates in the folding of proteins containing disulfide bonds, may be involved in glycosylation, prolyl hydroxylation and triglyceride transfer. This is Protein disulfide-isomerase 1 (pdi1) from Dictyostelium discoideum (Social amoeba).